A 512-amino-acid polypeptide reads, in one-letter code: ATP synthase subunit alpha (512 aa).

Residue 169–176 (GDRQTGKT) participates in ATP binding.

Belongs to the ATPase alpha/beta chains family. F-type ATPases have 2 components, CF(1) - the catalytic core - and CF(0) - the membrane proton channel. CF(1) has five subunits: alpha(3), beta(3), gamma(1), delta(1), epsilon(1). CF(0) has three main subunits: a(1), b(2) and c(9-12). The alpha and beta chains form an alternating ring which encloses part of the gamma chain. CF(1) is attached to CF(0) by a central stalk formed by the gamma and epsilon chains, while a peripheral stalk is formed by the delta and b chains.

It localises to the cell membrane. The enzyme catalyses ATP + H2O + 4 H(+)(in) = ADP + phosphate + 5 H(+)(out). Functionally, produces ATP from ADP in the presence of a proton gradient across the membrane. The alpha chain is a regulatory subunit. The sequence is that of ATP synthase subunit alpha from Elusimicrobium minutum (strain Pei191).